Consider the following 352-residue polypeptide: MLELNFSQTLGNHCLTINETLPANGITAIFGVSGAGKTSLINAISGLTRPQKGRIVLNGRVLNDAEKGICLTPEKRRVGYVFQDARLFPHYKVRGNLRYGMAKSMVDQFDKLVALLGIEPLLDRLPGSLSGGEKQRVAIGRALLTAPELLLLDEPLASLDIPRKRELLPYLQRLTREINIPMLYVSHSLDEILHLADRVMVLENGQVKAFGALEEVWGSSVMNPWLPKEQQSSILKVTVLEHHPHYAMTALALGDQHLWVNKLDEPLQAALRIRIQASDVSLVLQPPQQTSIRNVLRAKVVNSYDDNGQVEVELEVGGKTLWARISPWARDELAIKPGLWLYAQIKSVSITA.

The ABC transporter domain occupies 1 to 229 (MLELNFSQTL…SVMNPWLPKE (229 aa)). 31–38 (GVSGAGKT) is a binding site for ATP. Residues 289–352 (QTSIRNVLRA…AQIKSVSITA (64 aa)) enclose the Mop domain.

The protein belongs to the ABC transporter superfamily. Molybdate importer (TC 3.A.1.8) family. In terms of assembly, the complex is composed of two ATP-binding proteins (ModC), two transmembrane proteins (ModB) and a solute-binding protein (ModA).

The protein resides in the cell inner membrane. It carries out the reaction molybdate(out) + ATP + H2O = molybdate(in) + ADP + phosphate + H(+). Part of the ABC transporter complex ModABC involved in molybdenum import. Responsible for energy coupling to the transport system. This Shigella boydii serotype 4 (strain Sb227) protein is Molybdenum import ATP-binding protein ModC.